The following is a 328-amino-acid chain: Interferon regulatory factor 1 (328 aa).

The segment at residues 5–113 is a DNA-binding region (IRF tryptophan pentad repeat); it reads RMRMRPWLEM…SAVRVYRMLP (109 aa). The residue at position 78 (K78) is an N6-acetyllysine. The tract at residues 92 to 164 is disordered; it reads EEVKDQSRNK…STLPDDHSSY (73 aa). Low complexity predominate over residues 141–157; it reads GDSSPDTLSDGLSSSTL. Residues K276 and K300 each participate in a glycyl lysine isopeptide (Lys-Gly) (interchain with G-Cter in SUMO) cross-link.

It belongs to the IRF family. As to quaternary structure, monomer. Homodimer. Interacts with EP300. Interacts with MYD88. Interacts with PIAS3. Interacts with SPOP. Post-translationally, phosphorylated by CK2 and this positively regulates its activity. Sumoylation represses the transcriptional activity and displays enhanced resistance to protein degradation. Sumoylated by UBE2I/UBC9 and SUMO1. Inactivates the tumor suppressor activity. Elevated levels in tumor cells. Major site is Lys-276. Sumoylation is enhanced by PIAS3. Desumoylated by SENP1 in tumor cells and appears to compete with ubiquitination on C-terminal sites. In terms of processing, ubiquitinated in a SPOP-depedent manner. Appears to compete with sumoylation on C-terminal sites.

It is found in the nucleus. The protein localises to the cytoplasm. With respect to regulation, activated by MYD88. Functionally, transcriptional regulator which displays a remarkable functional diversity in the regulation of cellular responses. Regulates transcription of IFN and IFN-inducible genes, host response to viral and bacterial infections, regulation of many genes expressed during hematopoiesis, inflammation, immune responses and cell proliferation and differentiation, regulation of the cell cycle and induction of growth arrest and programmed cell death following DNA damage. Stimulates both innate and acquired immune responses through the activation of specific target genes and can act as a transcriptional activator and repressor regulating target genes by binding to an interferon-stimulated response element (ISRE) in their promoters. Has an essentail role in IFNG-dependent immunity to mycobacteria. Binds to a consensus sequence in gene promoters. Its target genes for transcriptional activation activity include: genes involved in anti-viral response, such as IFN-alpha/beta, RIGI, TNFSF10/TRAIL, ZBP1, OAS1/2, PIAS1/GBP, EIF2AK2/PKR and RSAD2/viperin; antibacterial response, such as GBP2, GBP5 and NOS2/INOS; anti-proliferative response, such as p53/TP53, LOX and CDKN1A; apoptosis, such as BBC3/PUMA, CASP1, CASP7 and CASP8; immune response, such as IL7, IL12A/B and IL15, PTGS2/COX2 and CYBB; DNA damage responses and DNA repair, such as POLQ/POLH; MHC class I expression, such as TAP1, PSMB9/LMP2, PSME1/PA28A, PSME2/PA28B and B2M and MHC class II expression, such as CIITA; metabolic enzymes, such as ACOD1/IRG1. Represses genes involved in anti-proliferative response, such as BIRC5/survivin, CCNB1, CCNE1, CDK1, CDK2 and CDK4 and in immune response, such as FOXP3, IL4, ANXA2 and TLR4. Stimulates p53/TP53-dependent transcription through enhanced recruitment of EP300 leading to increased acetylation of p53/TP53. Plays an important role in immune response directly affecting NK maturation and activity, macrophage production of IL12, Th1 development and maturation of CD8+ T-cells. Also implicated in the differentiation and maturation of dendritic cells and in the suppression of regulatory T (Treg) cells development. Acts as a tumor suppressor and plays a role not only in antagonism of tumor cell growth but also in stimulating an immune response against tumor cells. This is Interferon regulatory factor 1 (Irf1) from Rattus norvegicus (Rat).